Consider the following 303-residue polypeptide: Uridylate-specific endoribonuclease C (303 aa).

A signal peptide spans 1–16 (MVYLVFLCLLPSLISG). Positions 32-303 (TDAEIQSLAE…KRFVASSYPI (272 aa)) constitute an EndoU domain. Residues His-181, His-196, and Lys-239 contribute to the active site. A glycan (N-linked (GlcNAc...) asparagine) is linked at Asn-287.

This sequence belongs to the ENDOU family. In terms of assembly, monomer. It depends on Mn(2+) as a cofactor.

It localises to the secreted. It carries out the reaction ribonucleotidyl-uridine-RNA = a 5'-end dephospho-uridine-RNA + a 3'-end 2',3'-cyclophospho-ribonucleotide-RNA. Functionally, endoribonuclease that cleaves single-stranded RNAs at 5' of uridylates and releases a product with a 2',3'-cyclic phosphate at the 3'-end. The chain is Uridylate-specific endoribonuclease C (endou-c) from Xenopus laevis (African clawed frog).